A 194-amino-acid chain; its full sequence is Imidazoleglycerol-phosphate dehydratase (194 aa).

It belongs to the imidazoleglycerol-phosphate dehydratase family.

The protein resides in the cytoplasm. The enzyme catalyses D-erythro-1-(imidazol-4-yl)glycerol 3-phosphate = 3-(imidazol-4-yl)-2-oxopropyl phosphate + H2O. Its pathway is amino-acid biosynthesis; L-histidine biosynthesis; L-histidine from 5-phospho-alpha-D-ribose 1-diphosphate: step 6/9. The chain is Imidazoleglycerol-phosphate dehydratase from Caldicellulosiruptor saccharolyticus (strain ATCC 43494 / DSM 8903 / Tp8T 6331).